The sequence spans 291 residues: Probable S-adenosylmethionine-dependent methyltransferase CRG1 (291 aa).

Belongs to the methyltransferase superfamily.

The protein localises to the cytoplasm. Probable S-adenosylmethionine-dependent methyltransferase which mediates cantharidin resistance. The polypeptide is Probable S-adenosylmethionine-dependent methyltransferase CRG1 (CRG1) (Saccharomyces cerevisiae (strain ATCC 204508 / S288c) (Baker's yeast)).